The sequence spans 872 residues: Leucine--tRNA ligase (872 aa).

The short motif at 42–52 (PYPSGKLHMGH) is the 'HIGH' region element. The 'KMSKS' region motif lies at 632–636 (KMSKS). Lys635 provides a ligand contact to ATP.

Belongs to the class-I aminoacyl-tRNA synthetase family.

Its subcellular location is the cytoplasm. It carries out the reaction tRNA(Leu) + L-leucine + ATP = L-leucyl-tRNA(Leu) + AMP + diphosphate. The polypeptide is Leucine--tRNA ligase (Chromobacterium violaceum (strain ATCC 12472 / DSM 30191 / JCM 1249 / CCUG 213 / NBRC 12614 / NCIMB 9131 / NCTC 9757 / MK)).